The primary structure comprises 182 residues: CD-NTase-associated protein 15 (182 aa).

A run of 2 helical transmembrane segments spans residues 11–31 (ITGW…CTVW) and 33–53 (IGWI…TIGY).

This sequence belongs to the CBASS Cap15 membrane effector family. In terms of assembly, the beta barrel domain oligomerizes; in the presence of cyclic nucleotides (probably 3',2'-cGAMP) higher-level oligomers occur.

The protein resides in the cell membrane. Its function is as follows. Effector protein of a CBASS antivirus system. CBASS (cyclic oligonucleotide-based antiphage signaling system) provides immunity against bacteriophage. The CD-NTase protein (CdnE) synthesizes cyclic nucleotides in response to infection; these serve as specific second messenger signals. The signals activate a diverse range of effectors, leading to bacterial cell death and thus abortive phage infection. This system triggers membrane disruption without lysis. A type I-B CBASS system. Binds cyclic nucleotide second messenger 3',2'-cGAMP, probably oligomerizing, and induces cell membrane shrinkage and rupture, leading to cell death. Functionally, protects S.aureus against phage infection. When the CBASS operon (cdnE-cap15) is introduced in S.aureus strain RN4220 there is strong protection against lytic DNA phages 80alpha-vir and phi-NM1-gamma-6 but little to no protection against phages phi-NM4-gamma-4 or phi-12-gamma-3. This chain is CD-NTase-associated protein 15, found in Staphylococcus schleiferi.